We begin with the raw amino-acid sequence, 433 residues long: Homoserine O-acetyltransferase (433 aa).

Positions 41 to 385 constitute an AB hydrolase-1 domain; that stretch reads NVVLVCHALT…HGHDAFLVEP (345 aa). The disordered stretch occupies residues 55-74; it reads VARSPAPERNEGTRGAGQAG. Ser-166 serves as the catalytic Nucleophile. Residue Arg-237 participates in substrate binding. Residues Asp-345 and His-378 contribute to the active site. Asp-379 is a binding site for substrate. Residues 403–433 form a disordered region; sequence RAVSDDGGGGGNDSARPERDHAPVHASLFKG.

It belongs to the AB hydrolase superfamily. MetX family. As to quaternary structure, homodimer.

It is found in the cytoplasm. It carries out the reaction L-homoserine + acetyl-CoA = O-acetyl-L-homoserine + CoA. It participates in amino-acid biosynthesis; L-methionine biosynthesis via de novo pathway; O-acetyl-L-homoserine from L-homoserine: step 1/1. In terms of biological role, transfers an acetyl group from acetyl-CoA to L-homoserine, forming acetyl-L-homoserine. The chain is Homoserine O-acetyltransferase from Halorubrum lacusprofundi (strain ATCC 49239 / DSM 5036 / JCM 8891 / ACAM 34).